We begin with the raw amino-acid sequence, 224 residues long: MSDPVVRLRELRRSFSQGGVTIDVLRGVNLEIRPGEIVALLGPSGSGKSTMLQAIGLLEGGFSGLIEIAGTDASKLSGDDRTALRRDHLGFVYQFHHLLPDFNAIENVVLPQLVAGTDRAVAEARAAELLSALGLAKRLDHRPSQLSGGEQQRVAVARALANRPEMVLADEPTGNLDEATADRVLEEFLKLVRGEGSAALIATHNERLALRMDRVVRLHEGVLE.

An ABC transporter domain is found at 6 to 224; that stretch reads VRLRELRRSF…VVRLHEGVLE (219 aa). 42–49 is a binding site for ATP; that stretch reads GPSGSGKS.

Belongs to the ABC transporter superfamily. Lipoprotein translocase (TC 3.A.1.125) family. As to quaternary structure, the complex is composed of two ATP-binding proteins (LolD) and two transmembrane proteins (LolC and LolE).

The protein localises to the cell inner membrane. Part of the ABC transporter complex LolCDE involved in the translocation of mature outer membrane-directed lipoproteins, from the inner membrane to the periplasmic chaperone, LolA. Responsible for the formation of the LolA-lipoprotein complex in an ATP-dependent manner. This is Lipoprotein-releasing system ATP-binding protein LolD from Novosphingobium aromaticivorans (strain ATCC 700278 / DSM 12444 / CCUG 56034 / CIP 105152 / NBRC 16084 / F199).